The following is a 155-amino-acid chain: uncharacterized protein (155 aa).

Disordered regions lie at residues 24–63 (RVGY…VVLK) and 80–155 (KAAK…DENE). At S50 the chain carries Phosphoserine. An N6-acetyllysine modification is found at K108. Residues 128–147 (KQSSVRKNSQKQIKNSSLLS) are compositionally biased toward polar residues. 3 positions are modified to phosphoserine: S130, S147, and S150.

This is an uncharacterized protein from Mus musculus (Mouse).